The following is a 400-amino-acid chain: Serine/threonine transporter SstT (400 aa).

The next 8 membrane-spanning stretches (helical) occupy residues isoleucine 14 to tyrosine 34, serine 48 to glycine 68, valine 76 to leucine 96, alanine 136 to methionine 156, isoleucine 177 to phenylalanine 197, leucine 211 to valine 231, leucine 293 to isoleucine 313, and alanine 334 to isoleucine 354.

This sequence belongs to the dicarboxylate/amino acid:cation symporter (DAACS) (TC 2.A.23) family.

It is found in the cell inner membrane. It carries out the reaction L-serine(in) + Na(+)(in) = L-serine(out) + Na(+)(out). The enzyme catalyses L-threonine(in) + Na(+)(in) = L-threonine(out) + Na(+)(out). Its function is as follows. Involved in the import of serine and threonine into the cell, with the concomitant import of sodium (symport system). This is Serine/threonine transporter SstT from Acinetobacter baumannii (strain SDF).